We begin with the raw amino-acid sequence, 179 residues long: Large ribosomal subunit protein uL10 (179 aa).

This sequence belongs to the universal ribosomal protein uL10 family. As to quaternary structure, part of the ribosomal stalk of the 50S ribosomal subunit. The N-terminus interacts with L11 and the large rRNA to form the base of the stalk. The C-terminus forms an elongated spine to which L12 dimers bind in a sequential fashion forming a multimeric L10(L12)X complex.

Functionally, forms part of the ribosomal stalk, playing a central role in the interaction of the ribosome with GTP-bound translation factors. The chain is Large ribosomal subunit protein uL10 from Thermotoga neapolitana (strain ATCC 49049 / DSM 4359 / NBRC 107923 / NS-E).